We begin with the raw amino-acid sequence, 254 residues long: ATP-dependent L-serine kinase SbnI (254 aa).

Glu-20 is an active-site residue. Ser-33 contributes to the ADP binding site. Ile-57 serves as a coordination point for O-phospho-L-serine. The ADP site is built by Asp-58, Gly-59, His-61, and Arg-62. O-phospho-L-serine contacts are provided by Gly-59 and His-61. O-phospho-L-serine-binding residues include Trp-98 and Arg-229.

Forms dimers and tetramers in solution. Predominantly forms dimers. Dimerization/oligomerization is not essential for kinase activity.

It catalyses the reaction L-serine + ATP = O-phospho-L-serine + ADP + H(+). It functions in the pathway siderophore biosynthesis. Its activity is regulated as follows. Binds heme and heme binding inhibits DNA binding. Free serine kinase that uses ATP to phosphorylate L-serine to yield O-phospho-L-serine and ADP. O-phospho-L-serine serves as a substrate for SbnA and is a precursor for staphyloferrin B biosynthesis. Is also a DNA-binding regulatory protein that senses heme to control gene expression for siderophore biosynthesis. Binds to DNA within the sbnC coding region and is required for expression of genes in the sbn operon from sbnD onward. This Staphylococcus aureus (strain NCTC 8325 / PS 47) protein is ATP-dependent L-serine kinase SbnI.